We begin with the raw amino-acid sequence, 434 residues long: Enolase (434 aa).

Positions 158 and 167 each coordinate substrate. Residue glutamate 210 is the Proton donor of the active site. Mg(2+)-binding residues include aspartate 245, glutamate 294, and aspartate 319. Substrate-binding residues include glutamate 294 and aspartate 319. Catalysis depends on lysine 344, which acts as the Proton acceptor. Residues 371–374 and lysine 395 contribute to the substrate site; that span reads SHRS.

It belongs to the enolase family. As to quaternary structure, homodimer. Mg(2+) serves as cofactor.

It localises to the cytoplasm. It catalyses the reaction (2R)-2-phosphoglycerate = phosphoenolpyruvate + H2O. It participates in carbohydrate degradation; glycolysis; pyruvate from D-glyceraldehyde 3-phosphate: step 4/5. The polypeptide is Enolase (Doryteuthis pealeii (Longfin inshore squid)).